We begin with the raw amino-acid sequence, 357 residues long: DENN domain-containing protein 10 (357 aa).

The 136-residue stretch at 1-136 folds into the uDENN domain; that stretch reads MAAVVAMDTQ…IAVLTKGICQ (136 aa). A cDENN domain is found at 152–299; it reads KAYLAGSIKD…PEKSDSQVIQ (148 aa). In terms of domain architecture, dDENN spans 301-357; the sequence is IALKTKEIFTHLAPFSEVSDDGGKVILNVEALKQQRFPPATENFLYHLAAAEQMLKV.

This sequence belongs to the DENND10 family. In terms of assembly, interacts with the coiled-coil heterodimer of CCDC22 and CCDC93; the interaction is direct. Interacts with RAB27A and RAB27B (GDP-bound forms preferentially).

It is found in the late endosome. Its function is as follows. Guanine nucleotide exchange factor (GEF) regulating homeostasis of late endocytic pathway, including endosomal positioning, maturation and secretion, possibly through activating Rab proteins such as RAB27A and RAB27B. Promotes the exchange of GDP to GTP, converting inactive GDP-bound RAB27A and RAB27B into their active GTP-bound form. The chain is DENN domain-containing protein 10 from Mus musculus (Mouse).